The chain runs to 629 residues: Microtubule-associated protein 70-3 (629 aa).

Residues 1–54 (MEEGGYAFEVNNGRPTASEFGTTARISSPSLTMSSSFREGGGGGGSKGLTRRRS) are disordered. Residues 13-33 (GRPTASEFGTTARISSPSLTM) show a composition bias toward polar residues. Residues 75-375 (VKVELNRLEN…ADRAAKSEAQ (301 aa)) are a coiled coil. Residues 257–493 (ILDKLHRQKV…FPLNQSSEGT (237 aa)) are required for targeting to microtubules. 3 disordered regions span residues 391 to 421 (LRGP…LGGA), 458 to 519 (GTSR…DSVP), and 578 to 629 (AMEK…RSTQ). Residues 393 to 416 (GPSSSGNRSTPEGRSMSNGPSRRQ) are compositionally biased toward polar residues. The stretch at 544-592 (LRDKDEAIEMLAKKVETLTKAMEVEAKKMRREVAAMEKEVSAMRVDNKG) forms a coiled coil. Positions 578–596 (AMEKEVSAMRVDNKGSDSR) are enriched in basic and acidic residues. Residues 603 to 613 (NSKGASTTAQL) are compositionally biased toward polar residues.

Belongs to the MAP70 family.

The protein resides in the cytoplasm. It localises to the cytoskeleton. Functionally, plant-specific protein that interact with microtubules. The sequence is that of Microtubule-associated protein 70-3 (MAP70.3) from Arabidopsis thaliana (Mouse-ear cress).